Here is a 142-residue protein sequence, read N- to C-terminus: Lysozyme 2 (142 aa).

The signal sequence occupies residues 1–20 (MLKLTLTILAAVLLVTPAFG). A C-type lysozyme domain is found at 21-142 (KVYTRCSLAR…HTLPSIDDCF (122 aa)). Cystine bridges form between cysteine 26/cysteine 141, cysteine 47/cysteine 131, cysteine 82/cysteine 98, and cysteine 94/cysteine 112. The active site involves glutamate 52. N-linked (GlcNAc...) asparagine glycosylation occurs at asparagine 66. Aspartate 70 is a catalytic residue.

Belongs to the glycosyl hydrolase 22 family. As to expression, expressed only in the midgut where it is concentrated around the middle in all larval stages.

It is found in the secreted. The enzyme catalyses Hydrolysis of (1-&gt;4)-beta-linkages between N-acetylmuramic acid and N-acetyl-D-glucosamine residues in a peptidoglycan and between N-acetyl-D-glucosamine residues in chitodextrins.. Lysozymes have primarily a bacteriolytic function. Shows antibacterial activity against Gram-positive bacterium M.luteus but shows no activity against Gram-negative bacterium E.coli. Likely to play a role in the eradication of ingested pathogens during their passage through the intestine. The sequence is that of Lysozyme 2 from Lucilia sericata (Green bottle fly).